The chain runs to 294 residues: MATYGQNCARPMCIPPSYADLGKAARDIFNKGFGFGLVKLDVKTKSCSGVEFSTSGSSNTDTGKVTGTLETKYKWCEYGLTFTEKWNTDNTLGTEIAIEDQICQGLKLTFDTTFSPNTGKKSGKIKSSYKRECINLGCDVDFDFAGPAIHGSAVFGYEGWLAGYQMTFDSAKSKLTRNNFAVGYRTGDFQLHTNVNDGTEFGGSIYQKVCEDLDTSVNLAWTSGTNCTRFGIAAKYQLDPTASISAKVNNSSLIGVGYTQTLRPGVKLTLSALVDGKSINAGGHKLGLALELEA.

The residue at position 2 (alanine 2) is an N-acetylalanine. ATP-binding residues include lysine 23 and lysine 31. Position 31 is an N6-acetyllysine; alternate (lysine 31). Residue lysine 31 is modified to N6-succinyllysine; alternate. A Glycyl lysine isopeptide (Lys-Gly) (interchain with G-Cter in ubiquitin); alternate cross-link involves residue lysine 31. 2 beta stranded membrane-spanning segments follow: residues 37-46 (LVKLDVKTKS) and 50-58 (VEFSTSGSS). Residue lysine 64 forms a Glycyl lysine isopeptide (Lys-Gly) (interchain with G-Cter in ubiquitin) linkage. A beta stranded transmembrane segment spans residues 65 to 75 (VTGTLETKYKW). Tyrosine 78 is subject to Phosphotyrosine. Transmembrane regions (beta stranded) follow at residues 80–87 (LTFTEKWN), 91–100 (TLGTEIAIED), and 106–115 (LKLTFDTTFS). Position 118 is a phosphothreonine (threonine 118). Lysine 120 is modified (N6-acetyllysine; alternate). Residue lysine 120 forms a Glycyl lysine isopeptide (Lys-Gly) (interchain with G-Cter in ubiquitin); alternate linkage. Lysine 121 is covalently cross-linked (Glycyl lysine isopeptide (Lys-Gly) (interchain with G-Cter in ubiquitin)). The next 4 membrane-spanning stretches (beta stranded) occupy residues 122 to 131 (SGKIKSSYKR), 134 to 141 (INLGCDVD), 148 to 156 (AIHGSAVFG), and 161 to 169 (LAGYQMTFD). Lysine 172 participates in a covalent cross-link: Glycyl lysine isopeptide (Lys-Gly) (interchain with G-Cter in ubiquitin). 6 beta stranded membrane-spanning segments follow: residues 174–186 (KLTR…GYRT), 189–196 (FQLHTNVN), 200–209 (EFGGSIYQKV), 213–222 (LDTSVNLAWT), 229–238 (RFGIAAKYQL), and 242–249 (ASISAKVN). Serine 251 is modified (phosphoserine). Residues 253-255 (LIG) and 271-275 (SALVD) each bind NAD(+). 2 consecutive transmembrane segments (beta stranded) span residues 253-262 (LIGVGYTQTL) and 265-274 (GVKLTLSALV). Position 277 is an N6-acetyllysine; alternate (lysine 277). A Glycyl lysine isopeptide (Lys-Gly) (interchain with G-Cter in ubiquitin); alternate cross-link involves residue lysine 277. The beta stranded transmembrane segment at 284–293 (HKLGLALELE) threads the bilayer.

This sequence belongs to the eukaryotic mitochondrial porin family. As to quaternary structure, monomer, homodimer and higher order oligomers; formation of higher order structures is necessary for scramblase activity. Interacts with ARMC12 in a TBC1D21-dependent manner. Interacts with KLC3. Interacts with SPATA33. Interacts with PPP3CC in a SPATA33-dependent manner. Ubiquitinated by PRKN during mitophagy, leading to its degradation and enhancement of mitophagy. Deubiquitinated by USP30.

It localises to the mitochondrion outer membrane. Its subcellular location is the membrane. It catalyses the reaction chloride(in) = chloride(out). The catalysed reaction is K(+)(in) = K(+)(out). It carries out the reaction a 1,2-diacyl-sn-glycero-3-phospho-L-serine(in) = a 1,2-diacyl-sn-glycero-3-phospho-L-serine(out). The enzyme catalyses a 1,2-diacyl-sn-glycero-3-phosphocholine(in) = a 1,2-diacyl-sn-glycero-3-phosphocholine(out). It catalyses the reaction a 1,2-diacyl-sn-glycero-3-phospho-(1D-myo-inositol)(in) = a 1,2-diacyl-sn-glycero-3-phospho-(1D-myo-inositol)(out). Non-selective voltage-gated ion channel that mediates the transport of anions and cations through the mitochondrion outer membrane and plasma membrane. The channel adopts an open conformation at zero mV and a closed conformation at both positive and negative potentials. There are two populations of channels; the main that functions in a lower open-state conductance with lower ion selectivity, that switch, in a voltage-dependent manner, from the open to a low-conducting 'closed' state and the other that has a normal ion selectivity in the typical high conductance, 'open' state. Binds various lipids, including the sphingolipid ceramide, the phospholipid phosphatidylcholine, and the sterols cholesterol and oxysterol. Binding of ceramide promotes the mitochondrial outer membrane permeabilization (MOMP) apoptotic pathway. Functionally, catalyzes the scrambling of phospholipids across the outer mitochondrial membrane; the mechanism is unrelated to channel activity and is capable of translocating both anionic and zwitterionic phospholipids. The sequence is that of Non-selective voltage-gated ion channel VDAC2 from Bos taurus (Bovine).